We begin with the raw amino-acid sequence, 289 residues long: CCR4-associated factor 16 (289 aa).

The region spanning 7–249 (IEVRNLTYKF…SEVVNAKVNG (243 aa)) is the ABC transporter domain. Residue 41–48 (GANGAGKS) participates in ATP binding.

The protein belongs to the ABC transporter superfamily. As to quaternary structure, interacts with CCR4 and SSN2.

It localises to the cytoplasm. It is found in the nucleus. The protein is CCR4-associated factor 16 (CAF16) of Saccharomyces cerevisiae (strain ATCC 204508 / S288c) (Baker's yeast).